The primary structure comprises 37 residues: Cytochrome b6-f complex subunit 5 (37 aa).

A helical transmembrane segment spans residues Leu-5–Ala-25.

Belongs to the PetG family. As to quaternary structure, the 4 large subunits of the cytochrome b6-f complex are cytochrome b6, subunit IV (17 kDa polypeptide, PetD), cytochrome f and the Rieske protein, while the 4 small subunits are PetG, PetL, PetM and PetN. The complex functions as a dimer.

It is found in the plastid. Its subcellular location is the chloroplast thylakoid membrane. Functionally, component of the cytochrome b6-f complex, which mediates electron transfer between photosystem II (PSII) and photosystem I (PSI), cyclic electron flow around PSI, and state transitions. PetG is required for either the stability or assembly of the cytochrome b6-f complex. This is Cytochrome b6-f complex subunit 5 from Chaetosphaeridium globosum (Charophycean green alga).